The sequence spans 154 residues: MSLIPRIFGDRRSSSMFDPFSIDVFDPFRELGFPGTNSGETSAFANTRIDWKETPEAHVFKADLPGLKLEEVKVEVEEDRVLQISGERNMEKEDKNDKWQRVERSSGKFMRRFRLPENAKMDQVKASMENGVLTVTVPKEEMKKPDVKSIEISG.

The sHSP domain occupies Glu40–Gly154.

This sequence belongs to the small heat shock protein (HSP20) family. In terms of assembly, forms oligomeric structures.

The protein resides in the cytoplasm. This chain is 17.7 kDa class I heat shock protein, found in Solanum peruvianum (Peruvian tomato).